Reading from the N-terminus, the 101-residue chain is Pro-corazonin (101 aa).

A signal peptide spans methionine 1–alanine 19. Pyrrolidone carboxylic acid is present on glutamine 20. Asparagine 30 carries the post-translational modification Asparagine amide.

It belongs to the corazonin family.

The protein localises to the secreted. Functionally, cardioactive peptide. Corazonin is probably involved in the physiological regulation of the heart beat. In Bombyx mori (Silk moth), this protein is Pro-corazonin (crz).